The primary structure comprises 203 residues: Large ribosomal subunit protein bL25 (203 aa).

It belongs to the bacterial ribosomal protein bL25 family. CTC subfamily. Part of the 50S ribosomal subunit; part of the 5S rRNA/L5/L18/L25 subcomplex. Contacts the 5S rRNA. Binds to the 5S rRNA independently of L5 and L18.

Its function is as follows. This is one of the proteins that binds to the 5S RNA in the ribosome where it forms part of the central protuberance. The polypeptide is Large ribosomal subunit protein bL25 (Paraburkholderia phymatum (strain DSM 17167 / CIP 108236 / LMG 21445 / STM815) (Burkholderia phymatum)).